Reading from the N-terminus, the 315-residue chain is Putative carboxypeptidase RC0549 (315 aa).

The active-site Nucleophile is serine 125. Catalysis depends on charge relay system residues glutamate 225 and histidine 288.

It belongs to the peptidase S66 family.

The sequence is that of Putative carboxypeptidase RC0549 from Rickettsia conorii (strain ATCC VR-613 / Malish 7).